A 105-amino-acid chain; its full sequence is Large ribosomal subunit protein P2 (105 aa).

It belongs to the eukaryotic ribosomal protein P1/P2 family. As to quaternary structure, P1 and P2 exist as dimers at the large ribosomal subunit. In terms of processing, phosphorylated.

In terms of biological role, plays an important role in the elongation step of protein synthesis. The protein is Large ribosomal subunit protein P2 (LIP2) of Leishmania braziliensis.